Reading from the N-terminus, the 199-residue chain is Small ribosomal subunit protein uS5 (199 aa).

Residues 1 to 28 (MARTPNTDRRQRGGDDQRNRSPRSDERD) form a disordered region. One can recognise an S5 DRBM domain in the interval 31-94 (FLDKLVHINR…DQAKRTMIKV (64 aa)).

Belongs to the universal ribosomal protein uS5 family. As to quaternary structure, part of the 30S ribosomal subunit. Contacts proteins S4 and S8.

In terms of biological role, with S4 and S12 plays an important role in translational accuracy. Functionally, located at the back of the 30S subunit body where it stabilizes the conformation of the head with respect to the body. The protein is Small ribosomal subunit protein uS5 of Rhodospirillum rubrum (strain ATCC 11170 / ATH 1.1.1 / DSM 467 / LMG 4362 / NCIMB 8255 / S1).